A 609-amino-acid chain; its full sequence is Zinc metalloproteinase-disintegrin-like VAP2B (609 aa).

The signal sequence occupies residues 1–20 (MIQVLLVTICLAAFPYQGSS). Positions 21–189 (IILESGNVND…KKASQLVVTA (169 aa)) are excised as a propeptide. Glu-190 bears the Pyrrolidone carboxylic acid (Glu) mark. One can recognise a Peptidase M12B domain in the interval 198 to 393 (RFVELFLVVD…HNPECILNEP (196 aa)). Ca(2+) is bound by residues Glu-201 and Asp-285. 3 disulfides stabilise this stretch: Cys-308-Cys-388, Cys-348-Cys-372, and Cys-350-Cys-355. His-333 contacts Zn(2+). Glu-334 is a catalytic residue. Positions 337 and 343 each coordinate Zn(2+). Asn-371 carries an N-linked (GlcNAc...) asparagine glycan. Ca(2+) is bound by residues Cys-388, Asn-391, Val-403, Asn-406, Leu-408, Glu-410, Glu-413, and Asp-416. Residues 401–487 (PPVCGNELLE…ECPADVFHKN (87 aa)) form the Disintegrin domain. 22 disulfides stabilise this stretch: Cys-404/Cys-423, Cys-404/Cys-433, Cys-415/Cys-428, Cys-415/Cys-433, Cys-417/Cys-423, Cys-427/Cys-450, Cys-441/Cys-447, Cys-446/Cys-472, Cys-459/Cys-479, Cys-466/Cys-491, Cys-466/Cys-498, Cys-491/Cys-503, Cys-498/Cys-503, Cys-510/Cys-525, Cys-510/Cys-560, Cys-525/Cys-571, Cys-538/Cys-548, Cys-548/Cys-555, Cys-555/Cys-597, Cys-560/Cys-571, Cys-591/Cys-602, and Cys-597/Cys-602. The tract at residues 459–472 (CRASMSECDPAEHC) is inhibits platelet aggregation. The short motif at 465-467 (ECD) is the D/ECD-tripeptide element. Ca(2+) contacts are provided by Asp-467, Pro-468, Glu-470, Asp-482, and Val-483.

Belongs to the venom metalloproteinase (M12B) family. P-III subfamily. P-IIIb sub-subfamily. As to quaternary structure, monomer or heterodimer; non-covalently linked. Interacts with fibrillar collagen. Requires Zn(2+) as cofactor. The N-terminus is blocked. As to expression, expressed by the venom gland.

It is found in the secreted. In terms of biological role, zinc metalloprotease that abolishes platelet aggregation induced by collagen, but has no effect on platelet aggregation induced by ADP or thromboxane analog. This inhibition may be due to its ability to bind collagen and block the binding site on collagen for platelets and/or to its ability to bind to the platelet alpha-2/beta-1 collagen receptor (ITGA2/ITGB1) to block its interaction with collagen and hence prevent platelet stimulation. Functionally, abolishes platelet aggregation induced by collagen (IC(50)=66 nM) but not ADP-stimulated platelet aggregation. This inhibition may be due to its ability to bind collagen and block the binding site on collagen for platelets and/or to its ability to bind to the platelet alpha-2/beta-1 collagen receptor (ITGA2/ITGB1) to block its interaction with collagen and hence prevent platelet stimulation. In Crotalus atrox (Western diamondback rattlesnake), this protein is Zinc metalloproteinase-disintegrin-like VAP2B.